Consider the following 147-residue polypeptide: Microtubule-associated protein 1 light chain 3 gamma (147 aa).

A phosphoserine; by TBK1 mark is found at Ser93 and Ser96. Gly126 is lipidated: Phosphatidylethanolamine amidated glycine; alternate. The Phosphatidylserine amidated glycine; alternate moiety is linked to residue Gly126. A propeptide spans 127 to 147 (removed in mature form); that stretch reads CLESAAPRDGSSLEDRPCNPL.

The protein belongs to the ATG8 family. In terms of assembly, 3 different light chains, LC1 (a cleavage product of MAP1B), LC2 (a cleavage product of MAP1A) and LC3 (produced by one of the MAP1LC3 genes), can associate with the MAP1A or MAP1B heavy chains. Interacts with TP53INP1 and TP53INP2. Interacts with CALCOCO2. Interacts with TECPR2. Interacts with TBC1D5. Found in a complex with UBQLN1 and UBQLN2. Interacts with UBQLN4 (via STI1 1 and 2 domains). Interacts with UBQLN1 in the presence of UBQLN4. Interacts with TRIM5. Interacts with ATG13. Interacts with MEFV and TRIM21. Interacts with WDR81; recruits MAP1LC3C to ubiquitinated protein aggregates in the aggrephagy process. Interacts with MOAP1 (via LIR motif). Interacts with reticulophagy regulators RETREG1, RETREG2 and RETREG3. Interacts with TAX1BP1. Interacts with IRGM. Interacts with SPART. In terms of processing, the precursor molecule is cleaved by ATG4 (ATG4A, ATG4B, ATG4C or ATG4D) to expose the glycine at the C-terminus and form the cytosolic form, LC3-I. The processed form is then activated by APG7L/ATG7, transferred to ATG3 and conjugated to phosphatidylethanolamine (PE) phospholipid to form the membrane-bound form, LC3-II. During non-canonical autophagy, the processed form is conjugated to phosphatidylserine (PS) phospholipid. ATG4 proteins also mediate the delipidation of PE-conjugated forms. In addition, ATG4B and ATG4D mediate delipidation of ATG8 proteins conjugated to PS during non-canonical autophagy. (Microbial infection) The Legionella effector RavZ is a deconjugating enzyme that hydrolyzes the amide bond between the C-terminal glycine residue and an adjacent aromatic residue in ATG8 proteins conjugated to phosphatidylethanolamine (PE), producing an ATG8 protein that is resistant to reconjugation by the host machinery due to the cleavage of the reactive C-terminal glycine. RavZ is also able to mediate delipidation of ATG8 proteins conjugated to phosphatidylserine (PS). Post-translationally, phosphorylation at Ser-96 and Ser-98 by TBK1 prevents interaction with ATG4 (ATG4A, ATG4B, ATG4C or ATG4D). Phosphorylation by TBK1 on autophagosomes prevents their delipidation by ATG4 and premature removal from nascent autophagosomes. As to expression, most abundant in placenta, lung and ovary.

The protein resides in the cytoplasmic vesicle. It is found in the autophagosome membrane. Its subcellular location is the endomembrane system. It localises to the cytoplasm. The protein localises to the cytoskeleton. Ubiquitin-like modifier that plays a crucial role in antibacterial autophagy (xenophagy) through the selective binding of CALCOCO2. Recruits all ATG8 family members to infecting bacteria such as S.typhimurium. May also play a role in aggrephagy, the macroautophagic degradation of ubiquitinated and aggregated proteins. The polypeptide is Microtubule-associated protein 1 light chain 3 gamma (MAP1LC3C) (Homo sapiens (Human)).